The following is a 92-amino-acid chain: EIWKHFDADENGYIEGKFMQKYDKNSDQHVGSSAEFMEAWRDMSRLLPVQENFLLKFQGMKLTSEEFNAIFTFYDKNEPAILEMNIQQLWNY.

The region spanning 18–29 (FMQKYDKNSDQH) is the EF-hand domain.

The protein belongs to the calbindin family. As to expression, brain.

The chain is Protein 10 from Cavia porcellus (Guinea pig).